The following is a 304-amino-acid chain: tRNA-uridine aminocarboxypropyltransferase 1 (304 aa).

S2 is modified (N-acetylserine). Positions 206–209 (DSTW) match the DXTW motif.

Belongs to the TDD superfamily. DTWD1 family.

It is found in the nucleus. It catalyses the reaction a uridine in tRNA + S-adenosyl-L-methionine = a 3-[(3S)-3-amino-3-carboxypropyl]uridine in tRNA + S-methyl-5'-thioadenosine + H(+). In terms of biological role, catalyzes the formation of 3-(3-amino-3-carboxypropyl)uridine (acp3U) at position 20 in the D-loop of several cytoplasmic tRNAs (acp3U(20)). The polypeptide is tRNA-uridine aminocarboxypropyltransferase 1 (Homo sapiens (Human)).